The primary structure comprises 317 residues: MTPNKPTLHPRNRHQGRYDFPSLIKAHPDLARFTITNPHGKPSIDFANPEAVRVFNRALLKAQYGIQHWDIPADYLCPPIPGRADYIHVAADLLADDNAGDVPRGAQVRALDIGVGANCIYPLLGYSDYRWRFLGSDIDPVALASAKAIVQANGLGKAITLRQQANRAHILSGLLQEGERFDLTLCNPPFHASRDEATRGSQRKWKNLGKQDPKRKLPVLNFGGQNNELWCEGGEIRFVTQLIGESVQYAERVLWFTSLVSKASNLPGIEAALKKSGAKAVRIIEMGQGQKQSRMVAWSFLDDAARQAWHAQRKSQA.

Belongs to the methyltransferase superfamily. METTL16/RlmF family.

It localises to the cytoplasm. It carries out the reaction adenosine(1618) in 23S rRNA + S-adenosyl-L-methionine = N(6)-methyladenosine(1618) in 23S rRNA + S-adenosyl-L-homocysteine + H(+). Its function is as follows. Specifically methylates the adenine in position 1618 of 23S rRNA. The chain is Ribosomal RNA large subunit methyltransferase F from Pseudomonas putida (strain ATCC 47054 / DSM 6125 / CFBP 8728 / NCIMB 11950 / KT2440).